Consider the following 176-residue polypeptide: ATP-dependent protease subunit HslV (176 aa).

The active site involves Thr5. Residues Ala161, Cys164, and Thr167 each contribute to the Na(+) site.

Belongs to the peptidase T1B family. HslV subfamily. As to quaternary structure, a double ring-shaped homohexamer of HslV is capped on each side by a ring-shaped HslU homohexamer. The assembly of the HslU/HslV complex is dependent on binding of ATP.

The protein resides in the cytoplasm. It carries out the reaction ATP-dependent cleavage of peptide bonds with broad specificity.. With respect to regulation, allosterically activated by HslU binding. Its function is as follows. Protease subunit of a proteasome-like degradation complex believed to be a general protein degrading machinery. In Caldicellulosiruptor bescii (strain ATCC BAA-1888 / DSM 6725 / KCTC 15123 / Z-1320) (Anaerocellum thermophilum), this protein is ATP-dependent protease subunit HslV.